Consider the following 166-residue polypeptide: Salivary acidic proline-rich phosphoprotein 1/2 (166 aa).

A signal peptide spans 1-16 (MLLILLSVALLAFSSA). The disordered stretch occupies residues 16-166 (AQDLDEDVSQ…QGPPQGQSPQ (151 aa)). A Pyrrolidone carboxylic acid modification is found at Q17. The interval 17 to 46 (QDLDEDVSQEDVPLVISDGGDSEQFIDEER) is inhibits hydroxyapatite formation, binds to hydroxyapatite and calcium. S24 bears the Phosphoserine; by FAM20C mark. Residue S33 is modified to Phosphoserine; alternate. O-linked (GlcA) serine; alternate glycans are attached at residues S33 and S38. Residue S38 is modified to Phosphoserine; by FAM20C; alternate. 2 stretches are compositionally biased toward low complexity: residues 48–61 (GPPLGGQQSQPSAG) and 68–82 (GPQQGPPQQGGQQQQ). 2 stretches are compositionally biased toward pro residues: residues 83–111 (GPPPPQGKPQGPPQQGGHPPPPQGRPQGP) and 137–159 (GPPPPPPGKPQGPPPQGGRPQGP).

Post-translationally, proteolytically cleaved; PRP-2, PRP-1, PIF-S and Db-S yield PRP-4, PRP-3 (protein A), PIF-F and Db-F, respectively. In terms of processing, a hexuronic acid was shown to be linked to Ser-33 in about 40% of the polypeptides. Neither the structure of the carbohydrate (whether glucuronic acid or an isomer of), nor the linkage (whether a glycoside or an ester) has been definitely established.

The protein resides in the secreted. In terms of biological role, PRP's act as highly potent inhibitors of crystal growth of calcium phosphates. They provide a protective and reparative environment for dental enamel which is important for the integrity of the teeth. The protein is Salivary acidic proline-rich phosphoprotein 1/2 (PRH1) of Homo sapiens (Human).